A 431-amino-acid chain; its full sequence is Glutamate--tRNA ligase 1 (431 aa).

The 'HIGH' region motif lies at 6–16; the sequence is PSPTGDMHIGN. A 'KMSKS' region motif is present at residues 235 to 239; that stretch reads KMSKR. Residue Lys-238 coordinates ATP.

It belongs to the class-I aminoacyl-tRNA synthetase family. Glutamate--tRNA ligase type 1 subfamily. In terms of assembly, monomer.

The protein resides in the cytoplasm. The enzyme catalyses tRNA(Glu) + L-glutamate + ATP = L-glutamyl-tRNA(Glu) + AMP + diphosphate. Functionally, catalyzes the attachment of glutamate to tRNA(Glu) in a two-step reaction: glutamate is first activated by ATP to form Glu-AMP and then transferred to the acceptor end of tRNA(Glu). This Campylobacter jejuni subsp. jejuni serotype O:6 (strain 81116 / NCTC 11828) protein is Glutamate--tRNA ligase 1.